The chain runs to 307 residues: Ribosomal protein L11 methyltransferase (307 aa).

S-adenosyl-L-methionine contacts are provided by Thr-144, Gly-165, Asp-187, and Asn-235.

Belongs to the methyltransferase superfamily. PrmA family.

It localises to the cytoplasm. The enzyme catalyses L-lysyl-[protein] + 3 S-adenosyl-L-methionine = N(6),N(6),N(6)-trimethyl-L-lysyl-[protein] + 3 S-adenosyl-L-homocysteine + 3 H(+). Methylates ribosomal protein L11. This chain is Ribosomal protein L11 methyltransferase, found in Psychrobacter sp. (strain PRwf-1).